Consider the following 670-residue polypeptide: MEEFRRAYAKLCAAPQEAVLRRLRERGEAPGRARLDLAEQSLSLETCGALGRLLPGAAHFAEVALGDCGLSEDGVKLLLHGLCSNSTVKSLDLKGNNLRTTGAEALGKLLRQNKSIRSLILEWNSLGVWEEGFSFFCQGLGANNFLQRLDLRNNQINHHGAGELAMALKRNASLQELDLRWNNIGLLGGRALLNCLQSNKTLKKLELAGNNVPSDILKAVEQAMDHNRDRQTILSETQNRTSVLSKEILNLKDEKTKQFLDLMDTIDKQREEIARSGRISAGRVSQLQEALNEQHSIMNSLKAKLQMTEAALALSEQKVHNLGELLSATKQEQASMAERHFAELQQQKQEGADREGKLFRDLSASNEKNLFLRNQVDELEKKCKVQQDQIFQLKQDLTNTTAELKLRAVQAEERLEMEKRRFKQSLEDMESLRLKEVDHLTQHMEASERSMQDRVQRLEAIRIALEEELSQVKAAALTERGHAEEELIKVRNQARLEEQQRVEHLEEKLRLMTEARDEAQNCCLKQKQMVGEAQVKANQLNLHADGLRRRIEELQQDLNSKEQEKVTEVNKVKVELQEQIGHLQAERTAQEGLREKIAALERQLKVLSSNHREALLDKEGEISMLMEKLRMKEADISRMKEEEAQRASILQNAIMAYVQGSSLGTHSLRK.

LRR repeat units follow at residues 87-108 (TVKS…ALGK), 115-136 (SIRS…FSFF), 145-166 (FLQR…ELAM), 173-194 (SLQE…ALLN), and 201-223 (TLKK…VEQA). Positions 234-645 (LSETQNRTSV…ISRMKEEEAQ (412 aa)) form a coiled coil.

As to quaternary structure, homomer.

The protein localises to the cytoplasm. It is found in the cytoskeleton. The protein resides in the microtubule organizing center. It localises to the centrosome. Component of the proteinaceous fiber-like linker between two centrioles, required for centrosome cohesion. The polypeptide is Leucine-rich repeat-containing protein 45 (LRRC45) (Gallus gallus (Chicken)).